The following is a 276-amino-acid chain: Rhomboid protease GlpG (276 aa).

6 helical membrane passes run 94–114, 142–162, 169–189, 192–212, 229–249, and 250–270; these read GPVT…MSLI, IFMH…WYLG, LGSG…GYVQ, FSGP…GYVW, LIIF…GMSM, and ANGA…VDTL. Ser201 functions as the Nucleophile in the catalytic mechanism. His254 is a catalytic residue.

Belongs to the peptidase S54 family.

It localises to the cell inner membrane. It catalyses the reaction Cleaves type-1 transmembrane domains using a catalytic dyad composed of serine and histidine that are contributed by different transmembrane domains.. Functionally, rhomboid-type serine protease that catalyzes intramembrane proteolysis. This is Rhomboid protease GlpG from Salmonella agona (strain SL483).